The chain runs to 438 residues: UDP-N-acetylmuramoylalanine--D-glutamate ligase (438 aa).

112–118 contributes to the ATP binding site; that stretch reads GSNGKST.

Belongs to the MurCDEF family.

It is found in the cytoplasm. The enzyme catalyses UDP-N-acetyl-alpha-D-muramoyl-L-alanine + D-glutamate + ATP = UDP-N-acetyl-alpha-D-muramoyl-L-alanyl-D-glutamate + ADP + phosphate + H(+). It participates in cell wall biogenesis; peptidoglycan biosynthesis. In terms of biological role, cell wall formation. Catalyzes the addition of glutamate to the nucleotide precursor UDP-N-acetylmuramoyl-L-alanine (UMA). The polypeptide is UDP-N-acetylmuramoylalanine--D-glutamate ligase (Shigella sonnei (strain Ss046)).